An 81-amino-acid chain; its full sequence is Protein translocase subunit SecE (81 aa).

The chain crosses the membrane as a helical span at residues 50–70; that stretch reads VAVILMVILVSTVIYFVDQIF.

Belongs to the SecE/SEC61-gamma family. Component of the Sec protein translocase complex. Heterotrimer consisting of SecY, SecE and SecG subunits. The heterotrimers can form oligomers, although 1 heterotrimer is thought to be able to translocate proteins. Interacts with the ribosome. Interacts with SecDF, and other proteins may be involved. Interacts with SecA.

The protein localises to the cell inner membrane. It is found in the cellular thylakoid membrane. Its function is as follows. Essential subunit of the Sec protein translocation channel SecYEG. Clamps together the 2 halves of SecY. May contact the channel plug during translocation. The polypeptide is Protein translocase subunit SecE (Synechocystis sp. (strain ATCC 27184 / PCC 6803 / Kazusa)).